Here is a 501-residue protein sequence, read N- to C-terminus: Lysine--tRNA ligase (501 aa).

Mg(2+)-binding residues include Glu404 and Glu411.

It belongs to the class-II aminoacyl-tRNA synthetase family. As to quaternary structure, homodimer. Mg(2+) serves as cofactor.

It is found in the cytoplasm. It catalyses the reaction tRNA(Lys) + L-lysine + ATP = L-lysyl-tRNA(Lys) + AMP + diphosphate. This Campylobacter jejuni (strain RM1221) protein is Lysine--tRNA ligase.